The following is a 290-amino-acid chain: Protein male abnormal 3 (290 aa).

2 DNA-binding regions (DM) span residues 28-74 (CQRC…SKKK) and 94-142 (CARC…KLRR). Disordered stretches follow at residues 139-167 (KLRRSQQKSRDGKEPKRNSRRKSKDMDME) and 179-202 (IIGTSASPSPSSTTDTMSPSLSMS). Over residues 146–155 (KSRDGKEPKR) the composition is skewed to basic and acidic residues. Residues 182 to 202 (TSASPSPSSTTDTMSPSLSMS) are compositionally biased toward low complexity.

In terms of tissue distribution, expression is undetectable in hermaphrodites, but persists in males. In males, expressed in cells of the tail tip.

It localises to the nucleus. Transcription factor which binds the DNA motif 5'-[CGA][TCA][TA]ACAATGT[AT][TGA]C-3', probably as a monomer. Acts partially redundantly with the transcription factor dmd-3 to coordinate tail tip cell fusion and retraction and thereby regulate male tail tip morphogenesis. Promotes male-specific development of two tissues, the peripheral nervous system and the intestine. In the peripheral nervous system, directs differentiation of sensory ray neuroblasts into peripheral sense organs. In the intestine, causes repression of vitellogenin gene transcription. In Caenorhabditis elegans, this protein is Protein male abnormal 3.